A 180-amino-acid chain; its full sequence is Translation initiation factor IF-3 (180 aa).

This sequence belongs to the IF-3 family. As to quaternary structure, monomer.

The protein resides in the cytoplasm. In terms of biological role, IF-3 binds to the 30S ribosomal subunit and shifts the equilibrium between 70S ribosomes and their 50S and 30S subunits in favor of the free subunits, thus enhancing the availability of 30S subunits on which protein synthesis initiation begins. The polypeptide is Translation initiation factor IF-3 (Pectobacterium atrosepticum (strain SCRI 1043 / ATCC BAA-672) (Erwinia carotovora subsp. atroseptica)).